Reading from the N-terminus, the 411-residue chain is Probable phosphatase HAD1 (411 aa).

Over residues 14 to 23 (LPSPNTSQPP) the composition is skewed to polar residues. The tract at residues 14–33 (LPSPNTSQPPSAAPSRRGSF) is disordered. The Nucleophile role is filled by D61. D61, D63, and D338 together coordinate Mg(2+). Residue D63 is the Proton donor of the active site. The disordered stretch occupies residues 296–386 (PRPTPDVTPV…QSGQAGVTLD (91 aa)). Over residues 326–345 (VRNTQTIMKGSDDLTGNDSV) the composition is skewed to polar residues. Residues 362–373 (SVEKRAEMEFHR) are compositionally biased toward basic and acidic residues.

Belongs to the HAD-like hydrolase superfamily. In terms of processing, phosphorylated.

In terms of biological role, probable phosphatase. Required for cell wall integrity and virulence. This Cryptococcus neoformans var. grubii serotype A (strain H99 / ATCC 208821 / CBS 10515 / FGSC 9487) (Filobasidiella neoformans var. grubii) protein is Probable phosphatase HAD1.